Here is a 40-residue protein sequence, read N- to C-terminus: RapK inhibitor (40 aa).

Propeptides lie at residues 1 to 34 and Gly40; that span reads MKKL…IQVA.

It belongs to the Phr family. Post-translationally, contains a predicted signal peptide cleavage site in the N-terminal region, however the propeptide is probably only subject to processing events at the ends of the mature peptide.

It is found in the secreted. Its subcellular location is the cytoplasm. Signaling molecule involved in the regulation of genetic competence development. Secreted during production, but the mature peptide acts intracellularly, indicating that it needs to be imported into the cell to function. Stimulates expression of the genes controlled by ComA, a transcriptional factor that regulates the development of genetic competence. Acts by inhibiting RapK, which regulates the activity of ComA. The sequence is that of RapK inhibitor (phrK) from Bacillus subtilis (strain 168).